The sequence spans 271 residues: UPF0758 protein ACIAD3126 (271 aa).

The MPN domain occupies 120–242 (NLNSSRLVLD…TFSFAERALL (123 aa)). The Zn(2+) site is built by histidine 191, histidine 193, and aspartate 204. Positions 191–204 (HNHPFGKAEPSAAD) match the JAMM motif motif.

The protein belongs to the UPF0758 family.

The polypeptide is UPF0758 protein ACIAD3126 (Acinetobacter baylyi (strain ATCC 33305 / BD413 / ADP1)).